We begin with the raw amino-acid sequence, 208 residues long: 3-demethoxyubiquinol 3-hydroxylase (208 aa).

6 residues coordinate Fe cation: glutamate 57, glutamate 87, histidine 90, glutamate 139, glutamate 171, and histidine 174.

It belongs to the COQ7 family. The cofactor is Fe cation.

Its subcellular location is the cell membrane. The enzyme catalyses a 5-methoxy-2-methyl-3-(all-trans-polyprenyl)benzene-1,4-diol + AH2 + O2 = a 3-demethylubiquinol + A + H2O. The protein operates within cofactor biosynthesis; ubiquinone biosynthesis. Catalyzes the hydroxylation of 2-nonaprenyl-3-methyl-6-methoxy-1,4-benzoquinol during ubiquinone biosynthesis. This is 3-demethoxyubiquinol 3-hydroxylase from Burkholderia cenocepacia (strain HI2424).